Reading from the N-terminus, the 399-residue chain is DNA polymerase IV (399 aa).

Residues isoleucine 5–glycine 187 form the UmuC domain. Residues aspartate 9 and aspartate 105 each coordinate Mg(2+). Glutamate 106 is an active-site residue.

This sequence belongs to the DNA polymerase type-Y family. In terms of assembly, monomer. It depends on Mg(2+) as a cofactor.

It is found in the cytoplasm. It catalyses the reaction DNA(n) + a 2'-deoxyribonucleoside 5'-triphosphate = DNA(n+1) + diphosphate. Poorly processive, error-prone DNA polymerase involved in untargeted mutagenesis. Copies undamaged DNA at stalled replication forks, which arise in vivo from mismatched or misaligned primer ends. These misaligned primers can be extended by PolIV. Exhibits no 3'-5' exonuclease (proofreading) activity. May be involved in translesional synthesis, in conjunction with the beta clamp from PolIII. The sequence is that of DNA polymerase IV from Acetivibrio thermocellus (strain ATCC 27405 / DSM 1237 / JCM 9322 / NBRC 103400 / NCIMB 10682 / NRRL B-4536 / VPI 7372) (Clostridium thermocellum).